We begin with the raw amino-acid sequence, 102 residues long: Small ribosomal subunit protein uS10 (102 aa).

Belongs to the universal ribosomal protein uS10 family. In terms of assembly, part of the 30S ribosomal subunit.

Its function is as follows. Involved in the binding of tRNA to the ribosomes. The protein is Small ribosomal subunit protein uS10 of Dehalococcoides mccartyi (strain ATCC BAA-2266 / KCTC 15142 / 195) (Dehalococcoides ethenogenes (strain 195)).